The chain runs to 875 residues: Receptor-like protein 33 (875 aa).

The signal sequence occupies residues 1 to 23; that stretch reads MSLIPITFYFLFLFFSNFRGVFA. Residues 24–822 are Extracellular-facing; that stretch reads VPNIHLCHFE…GESETLESEQ (799 aa). N-linked (GlcNAc...) asparagine glycans are attached at residues Asn65, Asn103, Asn133, Asn146, and Asn181. LRR repeat units lie at residues 110–133, 134–157, 159–182, 183–205, 206–230, 231–254, 256–278, 280–302, 303–327, and 329–351; these read FHFLTTLDLSYNHLSGQISSSIGN, LSHLTTLDLSGNNFSGWIPSSLGN, FHLTSLHLYDNNFGGEIPSSLGNL, SYLTFLDLSTNNFVGEIPSSFGS, LNQLSILRLDNNKLSGNLPLEVINL, TKLSEISLSHNQFTGTLPPNITSL, ILESFSASGNNFVGTIPSSLFTI, SITLIFLDNNQLSGTLEFGNISS, PSNLLVLQLGGNNLRGPIPTSISRL, and NLRTLDLSHFNIQGQVDFNIFSH. N-linked (GlcNAc...) asparagine glycosylation is found at Asn229 and Asn250. Asn299 carries an N-linked (GlcNAc...) asparagine glycan. Residues 352–377 form an LRR 11; degenerate repeat; it reads LKLLGNLYLSHSNTTTTIDLNAVLSC. 3 N-linked (GlcNAc...) asparagine glycosylation sites follow: Asn364, Asn395, and Asn411. LRR repeat units lie at residues 378–401, 404–427, 428–451, 455–477, 479–502, 503–528, 530–549, 550–573, 575–596, 597–619, 620–643, 686–710, 711–734, 735–758, and 760–783; these read FKMLISLDLSGNHVLVTNKSSVSD, LGLIGSLNLSGCGITEFPDILRTQ, RQMRTLDISNNKIKGQVPSWLLLQ, MHISNNNFIGFERSTKLEKTVVP, PSMKHFFGSNNNFSGKIPSFICSL, RSLIILDLSNNNFSGAIPPCVGKFKS, LSDLNLRRNRLSGSLPKTII, KSLRSLDVSHNELEGKLPRSLIHF, TLEVLNVESNRINDTFPFWLSS, LKKLQVLVLRSNAFHGRIHKTRF, PKLRIIDISRNHFNGTLPSDCFVE, LKIYTALDFSGNKFEGEIPRSIGLL, KELHILNLSSNGFTGHIPSSMGNL, RELESLDVSRNKLSGEIPQELGNL, and YLAYMNFSHNQLVGQVPGGTQFRT. Asn490 and Asn514 each carry an N-linked (GlcNAc...) asparagine glycan. Asn587 carries N-linked (GlcNAc...) asparagine glycosylation. Asn633 is a glycosylation site (N-linked (GlcNAc...) asparagine). Residues Asn717, Asn757, and Asn765 are each glycosylated (N-linked (GlcNAc...) asparagine). A helical membrane pass occupies residues 823–843; it reads VLSWIAAAIGFTPGIVLGLTI. Residues 844–875 lie on the Cytoplasmic side of the membrane; sequence GHIVLSSKPRWFFKVLYINNSRRRRRTRSEKS.

This sequence belongs to the RLP family.

Its subcellular location is the cell membrane. This is Receptor-like protein 33 from Arabidopsis thaliana (Mouse-ear cress).